Here is a 235-residue protein sequence, read N- to C-terminus: MFDVTILTIFPEMFPGFLNYSLAGKALEKKIWNLQVINIRFFAKDRHLTVDHIPYGGGAGMIMRPDVVGDAVDSVLSTHKDTKFIYMTPSGTKFDQSIARELVGFPHITILCGRFEGIDQRVIDEYTPYELSIGDYILSGGEPAAMVILDVCVRLLPGVVNNSGSITEESFSYSGGVLEYPQYTRPKQWRKHRVPKILLSGNHKKISDWRQKQSQVITKRRRPELLDGEINDKFT.

S-adenosyl-L-methionine contacts are provided by residues Gly-113 and 133-138 (IGDYIL).

It belongs to the RNA methyltransferase TrmD family. Homodimer.

The protein resides in the cytoplasm. The enzyme catalyses guanosine(37) in tRNA + S-adenosyl-L-methionine = N(1)-methylguanosine(37) in tRNA + S-adenosyl-L-homocysteine + H(+). Specifically methylates guanosine-37 in various tRNAs. This Wolbachia sp. subsp. Brugia malayi (strain TRS) protein is tRNA (guanine-N(1)-)-methyltransferase.